Consider the following 453-residue polypeptide: Exodeoxyribonuclease 7 large subunit (453 aa).

It belongs to the XseA family. Heterooligomer composed of large and small subunits.

It is found in the cytoplasm. It carries out the reaction Exonucleolytic cleavage in either 5'- to 3'- or 3'- to 5'-direction to yield nucleoside 5'-phosphates.. Functionally, bidirectionally degrades single-stranded DNA into large acid-insoluble oligonucleotides, which are then degraded further into small acid-soluble oligonucleotides. The protein is Exodeoxyribonuclease 7 large subunit of Rickettsia typhi (strain ATCC VR-144 / Wilmington).